The primary structure comprises 81 residues: MNSKFVLIVVFLAVVSICFANEVWDPEKCGCPPFDKVENAVCTKDRATYDNRCQFDCHAKFLSKSGKTLEESPCIESADPK.

The N-terminal stretch at 1–20 (MNSKFVLIVVFLAVVSICFA) is a signal peptide.

This sequence belongs to the caterpillar 3 family. In terms of processing, contains 3 disulfide bonds. Expressed by the venom apparatus.

It localises to the secreted. Its function is as follows. Probable toxin. The chain is U-megalopygitoxin(3)-Mo4 from Megalopyge opercularis (Southern flannel moth).